The sequence spans 545 residues: CTP synthase (545 aa).

The segment at 1–266 (MTTKYIFVTG…DQLVVDRFGL (266 aa)) is amidoligase domain. S14 is a binding site for CTP. Residue S14 coordinates UTP. ATP contacts are provided by residues 15–20 (SLGKGI) and D72. Residues D72 and E140 each contribute to the Mg(2+) site. Residues 147–149 (DIE), 187–192 (KTKPTQ), and K223 each bind CTP. Residues 187–192 (KTKPTQ) and K223 each bind UTP. An ATP-binding site is contributed by 239–241 (KDV). The Glutamine amidotransferase type-1 domain occupies 291–542 (TIGMVGKYVS…IQAAGEYMKR (252 aa)). L-glutamine is bound at residue G352. Residue C379 is the Nucleophile; for glutamine hydrolysis of the active site. Residues 380–383 (LGMQ), E403, and R470 each bind L-glutamine. Active-site residues include H515 and E517.

The protein belongs to the CTP synthase family. Homotetramer.

It catalyses the reaction UTP + L-glutamine + ATP + H2O = CTP + L-glutamate + ADP + phosphate + 2 H(+). The enzyme catalyses L-glutamine + H2O = L-glutamate + NH4(+). The catalysed reaction is UTP + NH4(+) + ATP = CTP + ADP + phosphate + 2 H(+). It functions in the pathway pyrimidine metabolism; CTP biosynthesis via de novo pathway; CTP from UDP: step 2/2. Its activity is regulated as follows. Allosterically activated by GTP, when glutamine is the substrate; GTP has no effect on the reaction when ammonia is the substrate. The allosteric effector GTP functions by stabilizing the protein conformation that binds the tetrahedral intermediate(s) formed during glutamine hydrolysis. Inhibited by the product CTP, via allosteric rather than competitive inhibition. In terms of biological role, catalyzes the ATP-dependent amination of UTP to CTP with either L-glutamine or ammonia as the source of nitrogen. Regulates intracellular CTP levels through interactions with the four ribonucleotide triphosphates. The protein is CTP synthase of Tolumonas auensis (strain DSM 9187 / NBRC 110442 / TA 4).